Reading from the N-terminus, the 160-residue chain is Small ribosomal subunit protein uS7 (160 aa).

Belongs to the universal ribosomal protein uS7 family. In terms of assembly, part of the 30S ribosomal subunit. Contacts proteins S9 and S11.

Functionally, one of the primary rRNA binding proteins, it binds directly to 16S rRNA where it nucleates assembly of the head domain of the 30S subunit. Is located at the subunit interface close to the decoding center, probably blocks exit of the E-site tRNA. The chain is Small ribosomal subunit protein uS7 from Anaplasma marginale (strain Florida).